We begin with the raw amino-acid sequence, 90 residues long: uncharacterized protein (90 aa).

Positions 36–82 (DQEYSDAQMQLEDAVNALNKLWLSSNDQQREQLYRMRLQLQSLQNNM) form a coiled coil.

This is an uncharacterized protein from Bacillus subtilis (strain 168).